The primary structure comprises 373 residues: UDP-N-acetylglucosamine--N-acetylmuramyl-(pentapeptide) pyrophosphoryl-undecaprenol N-acetylglucosamine transferase (373 aa).

UDP-N-acetyl-alpha-D-glucosamine is bound by residues 14–16, Asn-128, Arg-165, Ser-199, and Gln-295; that span reads TAG.

It belongs to the glycosyltransferase 28 family. MurG subfamily.

It localises to the cell membrane. The enzyme catalyses di-trans,octa-cis-undecaprenyl diphospho-N-acetyl-alpha-D-muramoyl-L-alanyl-D-glutamyl-meso-2,6-diaminopimeloyl-D-alanyl-D-alanine + UDP-N-acetyl-alpha-D-glucosamine = di-trans,octa-cis-undecaprenyl diphospho-[N-acetyl-alpha-D-glucosaminyl-(1-&gt;4)]-N-acetyl-alpha-D-muramoyl-L-alanyl-D-glutamyl-meso-2,6-diaminopimeloyl-D-alanyl-D-alanine + UDP + H(+). It functions in the pathway cell wall biogenesis; peptidoglycan biosynthesis. Its function is as follows. Cell wall formation. Catalyzes the transfer of a GlcNAc subunit on undecaprenyl-pyrophosphoryl-MurNAc-pentapeptide (lipid intermediate I) to form undecaprenyl-pyrophosphoryl-MurNAc-(pentapeptide)GlcNAc (lipid intermediate II). This is UDP-N-acetylglucosamine--N-acetylmuramyl-(pentapeptide) pyrophosphoryl-undecaprenol N-acetylglucosamine transferase from Mycobacterium sp. (strain JLS).